We begin with the raw amino-acid sequence, 694 residues long: LMBR1 domain-containing protein 2 homolog (694 aa).

Residues 1–3 (MAY) are Extracellular-facing. A helical transmembrane segment spans residues 4–26 (LLSFGIVAALFLASISLYRYGNI). Topologically, residues 27-30 (PRQH) are cytoplasmic. Residues 31 to 51 (ILVTLSVLTAWCFSFLIVFTI) traverse the membrane as a helical segment. The Extracellular portion of the chain corresponds to 52-106 (PLDVTSTLYRQCVEEHRPTPAPNVTNTSSATVGPPPQCQEPWGMVPASVFPNLWR). Residues asparagine 74 and asparagine 77 are each glycosylated (N-linked (GlcNAc...) asparagine). The chain crosses the membrane as a helical span at residues 107-127 (IIYWSSQFLTWLIMPLMQSYL). Over 128–144 (KAGDFTVKGKLKSALIE) the chain is Cytoplasmic. The helical transmembrane segment at 145–165 (NAIYYGSYLFICGVLLIYIAV) threads the bilayer. The Extracellular portion of the chain corresponds to 166–181 (KGESLDWQKLKAIASS). Residues 182 to 202 (ASNTWGLFLLILLLGYALVEV) traverse the membrane as a helical segment. The Cytoplasmic segment spans residues 203–381 (PRSLWNNAKP…ECLLKAPFLK (179 aa)). Positions 222–249 (KAAKLSTEKAEAEEHVDDILESLQGLSR) form a coiled coil. Residues 382 to 402 (TMCVLTATMSAMVVWSELTFF) traverse the membrane as a helical segment. The Extracellular segment spans residues 403-426 (SRHPVLSIFANVIYVAKESYDFFT). The chain crosses the membrane as a helical span at residues 427 to 447 (IEVFSMVVLCYFFYCTYSTIL). The Cytoplasmic segment spans residues 448-467 (RIRFLNLYYLAPHHQTNEHS). Residues 468-488 (LIFSGMLLCRLTPPMCLNFLG) traverse the membrane as a helical segment. At 489-514 (LIHMDTHIIPNRIMETVYTQIMGHMD) the chain is on the extracellular side. The helical transmembrane segment at 515-535 (VIGIISNGFNIYFPMCMLAFC) threads the bilayer. The Cytoplasmic portion of the chain corresponds to 536–694 (LATWFSLGSR…PPPRGLFDDV (159 aa)). Residues 564 to 592 (ELVQEGKDLIAREKRRRQRAEEAMARRRD) adopt a coiled-coil conformation. The segment at 673 to 694 (DYEAETDGRIVGPPPRGLFDDV) is disordered.

The protein belongs to the LIMR family.

It localises to the membrane. This is LMBR1 domain-containing protein 2 homolog from Drosophila melanogaster (Fruit fly).